We begin with the raw amino-acid sequence, 88 residues long: Small ribosomal subunit protein uS15 (88 aa).

The protein belongs to the universal ribosomal protein uS15 family. As to quaternary structure, part of the 30S ribosomal subunit. Forms a bridge to the 50S subunit in the 70S ribosome, contacting the 23S rRNA.

Functionally, one of the primary rRNA binding proteins, it binds directly to 16S rRNA where it helps nucleate assembly of the platform of the 30S subunit by binding and bridging several RNA helices of the 16S rRNA. In terms of biological role, forms an intersubunit bridge (bridge B4) with the 23S rRNA of the 50S subunit in the ribosome. In Borrelia garinii subsp. bavariensis (strain ATCC BAA-2496 / DSM 23469 / PBi) (Borreliella bavariensis), this protein is Small ribosomal subunit protein uS15.